Reading from the N-terminus, the 147-residue chain is SsrA-binding protein (147 aa).

It belongs to the SmpB family.

It is found in the cytoplasm. Functionally, required for rescue of stalled ribosomes mediated by trans-translation. Binds to transfer-messenger RNA (tmRNA), required for stable association of tmRNA with ribosomes. tmRNA and SmpB together mimic tRNA shape, replacing the anticodon stem-loop with SmpB. tmRNA is encoded by the ssrA gene; the 2 termini fold to resemble tRNA(Ala) and it encodes a 'tag peptide', a short internal open reading frame. During trans-translation Ala-aminoacylated tmRNA acts like a tRNA, entering the A-site of stalled ribosomes, displacing the stalled mRNA. The ribosome then switches to translate the ORF on the tmRNA; the nascent peptide is terminated with the 'tag peptide' encoded by the tmRNA and targeted for degradation. The ribosome is freed to recommence translation, which seems to be the essential function of trans-translation. This Mycoplasmopsis agalactiae (strain NCTC 10123 / CIP 59.7 / PG2) (Mycoplasma agalactiae) protein is SsrA-binding protein.